The primary structure comprises 652 residues: DNA mismatch repair protein MutL (652 aa).

Disordered stretches follow at residues 357–377 (LGANDRQGSHSSNTPTLNYPS) and 425–457 (PDKGSSAQVQNTSGSDQASAQKHETTTLQNSTD). Residues 365–375 (SHSSNTPTLNY) show a composition bias toward polar residues.

It belongs to the DNA mismatch repair MutL/HexB family.

This protein is involved in the repair of mismatches in DNA. It is required for dam-dependent methyl-directed DNA mismatch repair. May act as a 'molecular matchmaker', a protein that promotes the formation of a stable complex between two or more DNA-binding proteins in an ATP-dependent manner without itself being part of a final effector complex. This chain is DNA mismatch repair protein MutL, found in Colwellia psychrerythraea (strain 34H / ATCC BAA-681) (Vibrio psychroerythus).